A 73-amino-acid polypeptide reads, in one-letter code: Maltose-binding periplasmic protein (73 aa).

The signal sequence occupies residues 1–30; that stretch reads MMTKTNLKMGARTLALSVLATLVLSASALA.

This sequence belongs to the bacterial solute-binding protein 1 family.

It is found in the periplasm. Functionally, involved in the high-affinity maltose membrane transport system. Initial receptor for the active transport of and chemotaxis toward maltooligosaccharides. The chain is Maltose-binding periplasmic protein (malE) from Photorhabdus luminescens (Xenorhabdus luminescens).